Here is a 152-residue protein sequence, read N- to C-terminus: Transcriptional regulator MraZ (152 aa).

SpoVT-AbrB domains follow at residues 5–52 and 81–124; these read ATLV…PLPE and ASEC…DETT.

Belongs to the MraZ family. In terms of assembly, dodecamer.

It localises to the cytoplasm. The protein localises to the nucleoid. Its function is as follows. Negatively regulates its own expression and that of the subsequent genes in the proximal part of the division and cell wall (dcw) gene cluster. Acts by binding directly to DNA. May also regulate the expression of genes outside the dcw cluster. The protein is Transcriptional regulator MraZ of Escherichia coli (strain K12).